A 343-amino-acid polypeptide reads, in one-letter code: C5a anaphylatoxin chemotactic receptor 2 (343 aa).

Residues 1-44 (MLNDTTSKDYEYEYDQEQYSDLLNVPVDCPAGNCFSNDAYLIVL) lie on the Extracellular side of the membrane. Residue N3 is glycosylated (N-linked (GlcNAc...) asparagine). The helical transmembrane segment at 45-67 (LGLYSVIFLVGVPGNTLLAWVTW) threads the bilayer. At 68-78 (KESRHRLGASW) the chain is on the cytoplasmic side. A helical transmembrane segment spans residues 79 to 101 (FLHLTMADLLCCVSLPFLAVPIA). The Extracellular segment spans residues 102–120 (QKGHWPYGTAGCWLLSSIT). An intrachain disulfide couples C113 to C192. Residues 121–143 (VLSMYASVLLLTGLSGDLFLLAF) form a helical membrane-spanning segment. Residues 144–155 (RPSWKNADQRTC) are Cytoplasmic-facing. A helical membrane pass occupies residues 156 to 178 (GVRVVQVSSWMLALLLTVPGAVY). The Extracellular segment spans residues 179–208 (RKLLQEHYPPRLVCGTNYGGSVTAEVTITT). The chain crosses the membrane as a helical span at residues 209–231 (VRFLFGFLVPLVFMASCHGILQR). The Cytoplasmic portion of the chain corresponds to 232-243 (QMARRHWPLGTA). Residues 244-266 (VVVGFFICWTPFHLLRVIIAVAS) traverse the membrane as a helical segment. At 267-280 (SHSPLLAWALEAEP) the chain is on the extracellular side. Residues 281-300 (LVTGLALAHSALNPIMFLYF) form a helical membrane-spanning segment. Residues 301–343 (GRKQLCKSLQAACHWALRDLQDEEESAVTKVSTSQEMVSEMPV) are Cytoplasmic-facing. Residue S326 is modified to Phosphoserine.

This sequence belongs to the G-protein coupled receptor 1 family. Interacts with C3 (the anaphylatoxin peptide C3a and the adipogenic hormone ASP); the interaction occurs with higher affinity for ASP, enhancing the phosphorylation and activation of GPR77, recruitment of ARRB2 to the cell surface and endocytosis of GRP77.

It is found in the cell membrane. Receptor for the chemotactic and inflammatory C3a, C4a and C5a anaphylatoxin peptides and also for their dearginated forms ASP/C3adesArg, C4adesArg and C5adesArg respectively. Couples weakly to G(i)-mediated signaling pathways. This chain is C5a anaphylatoxin chemotactic receptor 2 (C5ar2), found in Rattus norvegicus (Rat).